A 286-amino-acid polypeptide reads, in one-letter code: Orotidine 5'-phosphate decarboxylase (286 aa).

Substrate is bound by residues Asp-35, 57–59 (KTH), 89–98 (DRKFADIGNT), Tyr-239, and Arg-257. The active-site Proton donor is Lys-91.

This sequence belongs to the OMP decarboxylase family.

The enzyme catalyses orotidine 5'-phosphate + H(+) = UMP + CO2. It functions in the pathway pyrimidine metabolism; UMP biosynthesis via de novo pathway; UMP from orotate: step 2/2. The chain is Orotidine 5'-phosphate decarboxylase (URA3) from Yarrowia lipolytica (strain CLIB 122 / E 150) (Yeast).